The following is an 88-amino-acid chain: Small ribosomal subunit protein uS19 (88 aa).

This sequence belongs to the universal ribosomal protein uS19 family.

Its function is as follows. Protein S19 forms a complex with S13 that binds strongly to the 16S ribosomal RNA. The protein is Small ribosomal subunit protein uS19 (rpsS) of Mycoplasma capricolum subsp. capricolum (strain California kid / ATCC 27343 / NCTC 10154).